Reading from the N-terminus, the 235-residue chain is Transcriptional regulatory protein MalR (235 aa).

The region spanning 3-119 (NVLIVEDDPM…RFQTALSDYR (117 aa)) is the Response regulatory domain. Position 54 is a 4-aspartylphosphate (Asp54). The H-T-H motif DNA-binding region spans 178-197 (TEDLAKHTEISQVSIRKYLK).

Phosphorylated and activated by MalK.

Its subcellular location is the cytoplasm. In terms of biological role, member of a two-component regulatory system MalK/MalR. Activates transcription of maeA, maeN and yflS in presence of malate by binding to their promoter region. This Bacillus subtilis (strain 168) protein is Transcriptional regulatory protein MalR (malR).